The following is a 166-amino-acid chain: CDP-archaeol synthase (166 aa).

The next 4 helical transmembrane spans lie at 39 to 59 (IRGFVGGVTAGILIGAVQMYA), 61 to 81 (ISGLVPWFPPHTLTAVILLAI), 104 to 124 (EWFLVDQLDFVVGALLLTLLF), and 127 to 147 (IWMLNTMTIPLLIVILVLTPL).

The protein belongs to the CDP-archaeol synthase family. The cofactor is Mg(2+).

Its subcellular location is the cell membrane. It catalyses the reaction 2,3-bis-O-(geranylgeranyl)-sn-glycerol 1-phosphate + CTP + H(+) = CDP-2,3-bis-O-(geranylgeranyl)-sn-glycerol + diphosphate. Its pathway is membrane lipid metabolism; glycerophospholipid metabolism. In terms of biological role, catalyzes the formation of CDP-2,3-bis-(O-geranylgeranyl)-sn-glycerol (CDP-archaeol) from 2,3-bis-(O-geranylgeranyl)-sn-glycerol 1-phosphate (DGGGP) and CTP. This reaction is the third ether-bond-formation step in the biosynthesis of archaeal membrane lipids. This is CDP-archaeol synthase from Methanospirillum hungatei JF-1 (strain ATCC 27890 / DSM 864 / NBRC 100397 / JF-1).